We begin with the raw amino-acid sequence, 1296 residues long: ABC transporter B family member 21 (1296 aa).

Positions 1–59 are disordered; that stretch reads MDSVIESEEGLKVDSPNRADAETSNSKIHEEDEKELKTESDLKEEKKKTEKNKQEEDEK. Residues 9–59 are compositionally biased toward basic and acidic residues; it reads EGLKVDSPNRADAETSNSKIHEEDEKELKTESDLKEEKKKTEKNKQEEDEK. The helical transmembrane segment at 77–97 threads the bilayer; the sequence is IILMILGTIGAVGNGLGFPIM. Residues 80–368 form the ABC transmembrane type-1 1 domain; sequence MILGTIGAVG…ASPCLSAFAA (289 aa). N113 is a glycosylation site (N-linked (GlcNAc...) asparagine). A run of 5 helical transmembrane segments spans residues 128-148, 205-225, 227-247, 307-327, and 336-356; these read FVYL…GWMI, IQLV…GWLL, LVMV…AIVI, GLGL…AVWY, and GYTG…SMSL. One can recognise an ABC transporter 1 domain in the interval 403–639; the sequence is IELNNVNFSY…PEGAYSQLIR (237 aa). N-linked (GlcNAc...) asparagine glycosylation occurs at N409. Residue 438–445 participates in ATP binding; it reads GQSGSGKS. 3 N-linked (GlcNAc...) asparagine glycosylation sites follow: N505, N519, and N590. Residues 640-662 show a composition bias toward basic and acidic residues; sequence LQEDTKQTEDSTDEQKLSMESMK. Positions 640 to 672 are disordered; it reads LQEDTKQTEDSTDEQKLSMESMKRSSLRKSSLS. Residues S657 and S660 each carry the phosphoserine modification. Residues 730–1017 enclose the ABC transmembrane type-1 2 domain; the sequence is LILGSIAAVL…SSSLSPDSSK (288 aa). The next 2 helical transmembrane spans lie at 731–751 and 774–794; these read ILGS…GILI and IIFM…TIFF. N-linked (GlcNAc...) asparagine glycosylation is present at N826. Transmembrane regions (helical) follow at residues 865-885, 952-972, and 986-1006; these read VIAF…LPLI, GIVS…SYAA, and TTFD…VAIS. Residues 1052-1289 form the ABC transporter 2 domain; it reads IELRHISFKY…KDGVYASLVQ (238 aa). Residue 1087–1094 participates in ATP binding; the sequence is GESGSGKS. Residues N1141 and N1240 are each glycosylated (N-linked (GlcNAc...) asparagine).

It belongs to the ABC transporter superfamily. ABCB family. Multidrug resistance exporter (TC 3.A.1.201) subfamily.

Its subcellular location is the membrane. The protein is ABC transporter B family member 21 (ABCB21) of Arabidopsis thaliana (Mouse-ear cress).